We begin with the raw amino-acid sequence, 312 residues long: Malate dehydrogenase (312 aa).

NAD(+) contacts are provided by residues glycine 7–glycine 13 and aspartate 34. Substrate contacts are provided by arginine 81 and arginine 87. Residues asparagine 94 and isoleucine 117–asparagine 119 each bind NAD(+). 2 residues coordinate substrate: asparagine 119 and arginine 153. Catalysis depends on histidine 177, which acts as the Proton acceptor. Residue methionine 227 participates in NAD(+) binding.

This sequence belongs to the LDH/MDH superfamily. MDH type 1 family. As to quaternary structure, homodimer.

The catalysed reaction is (S)-malate + NAD(+) = oxaloacetate + NADH + H(+). Its function is as follows. Catalyzes the reversible oxidation of malate to oxaloacetate. This Enterobacter sp. (strain 638) protein is Malate dehydrogenase.